The primary structure comprises 570 residues: Small ribosomal subunit protein bS1 (570 aa).

6 S1 motif domains span residues 52–116, 134–199, 220–288, 305–375, 392–462, and 479–548; these read GAIL…LSRE, GSIV…VSRR, GERR…LGLK, GKRV…LGLK, GLRV…LGVK, and GSDI…LSIK.

It belongs to the bacterial ribosomal protein bS1 family.

In terms of biological role, binds mRNA; thus facilitating recognition of the initiation point. It is needed to translate mRNA with a short Shine-Dalgarno (SD) purine-rich sequence. The protein is Small ribosomal subunit protein bS1 (rpsA) of Chlamydia muridarum (strain MoPn / Nigg).